Consider the following 205-residue polypeptide: Proteasome subunit beta type-3 (205 aa).

The protein belongs to the peptidase T1B family. In terms of assembly, the 26S proteasome consists of a 20S proteasome core and two 19S regulatory subunits. The 20S proteasome core is composed of 28 subunits that are arranged in four stacked rings, resulting in a barrel-shaped structure. The two end rings are each formed by seven alpha subunits, and the two central rings are each formed by seven beta subunits. The catalytic chamber with the active sites is on the inside of the barrel.

The protein resides in the cytoplasm. Its subcellular location is the nucleus. Non-catalytic component of the proteasome, a multicatalytic proteinase complex which is characterized by its ability to cleave peptides with Arg, Phe, Tyr, Leu, and Glu adjacent to the leaving group at neutral or slightly basic pH. The proteasome has an ATP-dependent proteolytic activity. This is Proteasome subunit beta type-3 from Drosophila melanogaster (Fruit fly).